The sequence spans 196 residues: Phosphatidyl-N-methylethanolamine N-methyltransferase (196 aa).

A topological domain (lumenal) is located at residue Met1. The helical intramembrane region spans 2–28 (AIFEINNSFLICAVSIALNPLLWNIAA). The Lumenal segment spans residues 29–40 (RSEYNHKTLTKL). Residues 41-62 (ANGDSKKACYMLAACIFVAGIV) form a helical membrane-spanning segment. The Cytoplasmic segment spans residues 63–89 (RDLIYQNALKQQPTLGIFMNPLVQGIA). A helical membrane pass occupies residues 90–110 (KLIFCFGSVLVLSSMYKLGLV). An S-adenosyl-L-methionine-binding site is contributed by 94–96 (CFG). At 111-153 (GTYLGDYFGFLLPERVSGFPFNVNDNPMYNGSTLCFLSTALRY) the chain is on the lumenal side. The helical transmembrane segment at 154-174 (GKVAGLLLTLEVFFVYRIALK) threads the bilayer. Over 175-196 (FEEPFTAKIYAARDSKQAKKSE) the chain is Cytoplasmic. 176 to 177 (EE) lines the S-adenosyl-L-methionine pocket.

This sequence belongs to the class VI-like SAM-binding methyltransferase superfamily. PEMT/PEM2 methyltransferase family.

The protein resides in the endoplasmic reticulum membrane. It is found in the mitochondrion membrane. It carries out the reaction a 1,2-diacyl-sn-glycero-3-phospho-N-methylethanolamine + S-adenosyl-L-methionine = a 1,2-diacyl-sn-glycero-3-phospho-N,N-dimethylethanolamine + S-adenosyl-L-homocysteine + H(+). The enzyme catalyses a 1,2-diacyl-sn-glycero-3-phospho-N,N-dimethylethanolamine + S-adenosyl-L-methionine = a 1,2-diacyl-sn-glycero-3-phosphocholine + S-adenosyl-L-homocysteine + H(+). Its pathway is phospholipid metabolism; phosphatidylcholine biosynthesis. Its function is as follows. Catalyzes the second two steps of the methylation pathway of phosphatidylcholine biosynthesis, the SAM-dependent methylation of phosphatidylmonomethylethanolamine (PMME) to phosphatidyldimethylethanolamine (PDME) and of PDME to phosphatidylcholine (PC). In Schizosaccharomyces pombe (strain 972 / ATCC 24843) (Fission yeast), this protein is Phosphatidyl-N-methylethanolamine N-methyltransferase.